The chain runs to 404 residues: G-protein coupled receptor 182 (404 aa).

The Extracellular portion of the chain corresponds to Met-1 to Phe-57. 2 N-linked (GlcNAc...) asparagine glycosylation sites follow: Asn-28 and Asn-37. The helical transmembrane segment at Ala-58–Trp-79 threads the bilayer. Residues Arg-80–Leu-90 are Cytoplasmic-facing. The helical transmembrane segment at Tyr-91 to Val-113 threads the bilayer. Topologically, residues Thr-114 to Arg-127 are extracellular. The cysteines at positions 126 and 202 are disulfide-linked. A helical transmembrane segment spans residues Phe-128–Val-149. At Asp-150–Arg-170 the chain is on the cytoplasmic side. Residues Arg-171–Gln-193 traverse the membrane as a helical segment. At Leu-194–Ala-217 the chain is on the extracellular side. Residues Val-218 to Val-239 form a helical membrane-spanning segment. At Leu-240 to Leu-258 the chain is on the cytoplasmic side. Residues Leu-259–Leu-280 form a helical membrane-spanning segment. Over Leu-281–Tyr-299 the chain is Extracellular. The helical transmembrane segment at Phe-300–Tyr-320 threads the bilayer. The Cytoplasmic segment spans residues Asn-321–Ser-404.

This sequence belongs to the G-protein coupled receptor 1 family. In terms of tissue distribution, highly expressed in heart, skeletal muscle, immune system, adrenal gland and liver.

The protein localises to the cell membrane. Orphan receptor. The chain is G-protein coupled receptor 182 (GPR182) from Homo sapiens (Human).